Reading from the N-terminus, the 89-residue chain is Small ribosomal subunit protein uS15 (89 aa).

It belongs to the universal ribosomal protein uS15 family. Part of the 30S ribosomal subunit. Forms a bridge to the 50S subunit in the 70S ribosome, contacting the 23S rRNA.

Its function is as follows. One of the primary rRNA binding proteins, it binds directly to 16S rRNA where it helps nucleate assembly of the platform of the 30S subunit by binding and bridging several RNA helices of the 16S rRNA. Forms an intersubunit bridge (bridge B4) with the 23S rRNA of the 50S subunit in the ribosome. The protein is Small ribosomal subunit protein uS15 of Protochlamydia amoebophila (strain UWE25).